We begin with the raw amino-acid sequence, 22 residues long: Putative ORF3b protein (22 aa).

In terms of biological role, acts as an interferon antagonist when expressed ex vivo. The protein is Putative ORF3b protein of Severe acute respiratory syndrome coronavirus 2 (2019-nCoV).